The primary structure comprises 298 residues: GTP cyclohydrolase FolE2 (298 aa).

This sequence belongs to the GTP cyclohydrolase IV family.

It carries out the reaction GTP + H2O = 7,8-dihydroneopterin 3'-triphosphate + formate + H(+). The protein operates within cofactor biosynthesis; 7,8-dihydroneopterin triphosphate biosynthesis; 7,8-dihydroneopterin triphosphate from GTP: step 1/1. Converts GTP to 7,8-dihydroneopterin triphosphate. The polypeptide is GTP cyclohydrolase FolE2 (Pseudomonas paraeruginosa (strain DSM 24068 / PA7) (Pseudomonas aeruginosa (strain PA7))).